The sequence spans 103 residues: Large ribosomal subunit protein bL21 (103 aa).

It belongs to the bacterial ribosomal protein bL21 family. As to quaternary structure, part of the 50S ribosomal subunit. Contacts protein L20.

Functionally, this protein binds to 23S rRNA in the presence of protein L20. The protein is Large ribosomal subunit protein bL21 of Haemophilus influenzae (strain PittEE).